The chain runs to 735 residues: Cyclic nucleotide-gated channel cone photoreceptor subunit alpha (735 aa).

The Cytoplasmic segment spans residues 1–214 (MAKINTQHSY…PSSNMYYNWL (214 aa)). A disordered region spans residues 142 to 191 (VNFSNNTNEDKKEEKKEVKEEKKEEKKEEKKEEKKDDKKDDKKDDKKDDK). A compositionally biased stretch (basic and acidic residues) spans 149–191 (NEDKKEEKKEVKEEKKEEKKEEKKEEKKDDKKDDKKDDKKDDK). A helical transmembrane segment spans residues 215–236 (TIIAAPVFYNWCMLICRACFDE). Topologically, residues 237-246 (LQIDHIKLWL) are extracellular. A helical membrane pass occupies residues 247 to 267 (FLDYCSDIIYVFDMFVRFRTG). Over 268–292 (FLEQGLLVKDEKKLRDHYTQTVQFK) the chain is Cytoplasmic. Residues 293–311 (LDVLSLLPTDLAYLKLGLN) traverse the membrane as a helical segment. The Extracellular portion of the chain corresponds to 312–316 (YPELR). The helical transmembrane segment at 317–335 (FNRLLRIARLFEFFDRTET) threads the bilayer. The Cytoplasmic segment spans residues 336-342 (RTNYPNM). A helical membrane pass occupies residues 343 to 366 (FRIGNLVLYILIIIHWNACIYFAI). The Extracellular portion of the chain corresponds to 367–389 (SKVIGFGTDSWVYPNVSIPEYGR). A run of 2 helical transmembrane segments spans residues 390–424 (LSRK…LFVV) and 425–449 (IDFL…SNMN). Residues 450–735 (ASRAEFQAKV…PEKPEEQKKD (286 aa)) lie on the Cytoplasmic side of the membrane. Residues 532–654 (LLIE…DNLI), E591, and R606 each bind 3',5'-cyclic GMP. Residues 715-735 (GSGSLSVGEPEPEKPEEQKKD) are disordered. The span at 725–735 (EPEKPEEQKKD) shows a compositional bias: basic and acidic residues.

It belongs to the cyclic nucleotide-gated cation channel (TC 1.A.1.5) family.

The protein resides in the membrane. Visual signal transduction is mediated by a G-protein coupled cascade using cGMP as second messenger. This protein can be activated by cyclic GMP which leads to an opening of the cation channel and thereby causing a depolarization of cone photoreceptors. This chain is Cyclic nucleotide-gated channel cone photoreceptor subunit alpha, found in Gallus gallus (Chicken).